The chain runs to 100 residues: Small ribosomal subunit protein uS14 (100 aa).

It belongs to the universal ribosomal protein uS14 family. In terms of assembly, part of the 30S ribosomal subunit. Contacts proteins S3 and S10.

Functionally, binds 16S rRNA, required for the assembly of 30S particles and may also be responsible for determining the conformation of the 16S rRNA at the A site. The chain is Small ribosomal subunit protein uS14 from Synechococcus sp. (strain CC9311).